The chain runs to 68 residues: Conotoxin Lt5.11 (68 aa).

Positions 1-19 are cleaved as a signal peptide; that stretch reads MLCLPVFIILLLLASPAAP. Residues 20–54 constitute a propeptide that is removed on maturation; sequence KSLETRIQNDLIRAGLTDADLKTEKGFLSGLLNVA.

It belongs to the conotoxin T superfamily. In terms of processing, contains 2 disulfide bonds that can be either 'C1-C3, C2-C4' or 'C1-C4, C2-C3', since these disulfide connectivities have been observed for conotoxins with cysteine framework V (for examples, see AC P0DQQ7 and AC P81755). In terms of tissue distribution, expressed by the venom duct.

The protein resides in the secreted. In Conus litteratus (Lettered cone), this protein is Conotoxin Lt5.11.